Consider the following 273-residue polypeptide: NH(3)-dependent NAD(+) synthetase (273 aa).

45 to 52 (GISGGQDS) contacts ATP. Aspartate 51 provides a ligand contact to Mg(2+). Residue arginine 139 participates in deamido-NAD(+) binding. Threonine 159 is a binding site for ATP. Glutamate 164 is a Mg(2+) binding site. Residues lysine 172 and aspartate 179 each contribute to the deamido-NAD(+) site. Residues lysine 188 and threonine 210 each contribute to the ATP site. Residue 259–260 (HK) participates in deamido-NAD(+) binding.

This sequence belongs to the NAD synthetase family. Homodimer.

It catalyses the reaction deamido-NAD(+) + NH4(+) + ATP = AMP + diphosphate + NAD(+) + H(+). It functions in the pathway cofactor biosynthesis; NAD(+) biosynthesis; NAD(+) from deamido-NAD(+) (ammonia route): step 1/1. Its function is as follows. Catalyzes the ATP-dependent amidation of deamido-NAD to form NAD. Uses ammonia as a nitrogen source. The polypeptide is NH(3)-dependent NAD(+) synthetase (Bacillus pumilus (strain SAFR-032)).